The sequence spans 199 residues: Recombination protein RecR (199 aa).

The C4-type zinc-finger motif lies at 58–73 (CKTCGNIDTQSPCTVC). One can recognise a Toprim domain in the interval 81-176 (AMIVVVADVA…KVTRLAHGVP (96 aa)).

It belongs to the RecR family.

May play a role in DNA repair. It seems to be involved in an RecBC-independent recombinational process of DNA repair. It may act with RecF and RecO. This is Recombination protein RecR from Bradyrhizobium sp. (strain ORS 278).